The following is a 134-amino-acid chain: NADH-quinone oxidoreductase subunit A (134 aa).

The next 3 helical transmembrane spans lie at Phe-12–Leu-32, Phe-64–Trp-84, and Trp-93–Leu-113.

The protein belongs to the complex I subunit 3 family. In terms of assembly, NDH-1 is composed of 13 different subunits. Subunits NuoA, H, J, K, L, M, N constitute the membrane sector of the complex.

It is found in the cell inner membrane. The catalysed reaction is a quinone + NADH + 5 H(+)(in) = a quinol + NAD(+) + 4 H(+)(out). Its function is as follows. NDH-1 shuttles electrons from NADH, via FMN and iron-sulfur (Fe-S) centers, to quinones in the respiratory chain. The immediate electron acceptor for the enzyme in this species is believed to be ubiquinone. Couples the redox reaction to proton translocation (for every two electrons transferred, four hydrogen ions are translocated across the cytoplasmic membrane), and thus conserves the redox energy in a proton gradient. The sequence is that of NADH-quinone oxidoreductase subunit A from Shewanella oneidensis (strain ATCC 700550 / JCM 31522 / CIP 106686 / LMG 19005 / NCIMB 14063 / MR-1).